The chain runs to 325 residues: Methionyl-tRNA formyltransferase (325 aa).

112-115 (SLLP) is a binding site for (6S)-5,6,7,8-tetrahydrofolate.

This sequence belongs to the Fmt family.

The catalysed reaction is L-methionyl-tRNA(fMet) + (6R)-10-formyltetrahydrofolate = N-formyl-L-methionyl-tRNA(fMet) + (6S)-5,6,7,8-tetrahydrofolate + H(+). Functionally, attaches a formyl group to the free amino group of methionyl-tRNA(fMet). The formyl group appears to play a dual role in the initiator identity of N-formylmethionyl-tRNA by promoting its recognition by IF2 and preventing the misappropriation of this tRNA by the elongation apparatus. This chain is Methionyl-tRNA formyltransferase, found in Roseiflexus sp. (strain RS-1).